The following is a 151-amino-acid chain: MITFTPTRNIDLIEMVGNHPDIIAGSNNGDGYDYKPECRYFEVNVHGQFGGIVYYNEIQPMTFDCHAMYLPEIRGFSKEIGLAFWRYILTNTTVQCVTSFAARKFADGQMYCAMIGLKRVGTIKKYFKGVDDVTFYAATREELTELLNNGR.

The chain is Protein gp14 (14) from Salmonella phage P22 (Bacteriophage P22).